The following is an 857-amino-acid chain: KH domain-containing protein HEN4 (857 aa).

A compositionally biased stretch (basic and acidic residues) spans 1–15 (MERNSVKFHAEKRSG). Residues 1–27 (MERNSVKFHAEKRSGAFDPGSGFGSSK) are disordered. KH domains lie at 46-110 (HAAF…KLGA), 149-217 (TVVC…LVSI), 451-521 (DVVF…IMLI), and 541-610 (SITA…IFHI). The interval 644-755 (SDNPLSIGSH…RGLSDASGGL (112 aa)) is disordered. Composition is skewed to polar residues over residues 645–665 (DNPLSIGSHQSVSNPATNSSS) and 673–688 (SFLSGSHSSVNYSRSV). The segment covering 718 to 730 (FTMDHSDNSHHLT) has biased composition (basic and acidic residues). The span at 746–755 (RGLSDASGGL) shows a compositional bias: low complexity. The 65-residue stretch at 775–839 (NTTVEIRVPA…DQTQAAQNLL (65 aa)) folds into the KH 5 domain.

In terms of assembly, interacts with HUA1. Interacts with FLK and PEP.

The protein localises to the nucleus speckle. Its function is as follows. Functions in floral reproductive organ identity in the third whorl and floral determinacy specification by specifically promoting the processing of AGAMOUS (AG) pre-mRNA. Functions in association with HUA1 and HUA2. In Arabidopsis thaliana (Mouse-ear cress), this protein is KH domain-containing protein HEN4.